Here is a 194-residue protein sequence, read N- to C-terminus: FK506-binding protein 3 (194 aa).

An N-terminal signal peptide occupies residues 1–19 (MNKFLIALLVLATLAVSFS). The 90-residue stretch at 44–133 (GDYISLKYVG…YFDLEVVSIE (90 aa)) folds into the PPIase FKBP-type domain. Residues 148–168 (VGTIIAFSMLAGFIVLVKFII) form a helical membrane-spanning segment. The tract at residues 173-194 (DESNSKKPAPGKPKKTKAAKQN) is disordered. A compositionally biased stretch (basic residues) spans 184-194 (KPKKTKAAKQN).

The protein belongs to the FKBP-type PPIase family.

Its subcellular location is the membrane. It catalyses the reaction [protein]-peptidylproline (omega=180) = [protein]-peptidylproline (omega=0). Inhibited by both FK506 and rapamycin. Its function is as follows. PPIases accelerate the folding of proteins by catalyzing the cis-trans isomerization of proline imidic peptide bonds in oligopeptides. This Dictyostelium discoideum (Social amoeba) protein is FK506-binding protein 3 (fkbp3).